The primary structure comprises 312 residues: Methionyl-tRNA formyltransferase (312 aa).

(6S)-5,6,7,8-tetrahydrofolate is bound at residue 109 to 112; that stretch reads SLLP.

The protein belongs to the Fmt family.

It catalyses the reaction L-methionyl-tRNA(fMet) + (6R)-10-formyltetrahydrofolate = N-formyl-L-methionyl-tRNA(fMet) + (6S)-5,6,7,8-tetrahydrofolate + H(+). In terms of biological role, attaches a formyl group to the free amino group of methionyl-tRNA(fMet). The formyl group appears to play a dual role in the initiator identity of N-formylmethionyl-tRNA by promoting its recognition by IF2 and preventing the misappropriation of this tRNA by the elongation apparatus. This is Methionyl-tRNA formyltransferase from Caulobacter sp. (strain K31).